We begin with the raw amino-acid sequence, 68 residues long: Amphipathic peptide OcyC1 (68 aa).

A signal peptide spans 1 to 23 (MKAQLCILLIALVLFQTFSQSDA). Phe36 carries the post-translational modification Phenylalanine amide. Positions 38-68 (RRGLNDLDDLDELFDGEISQADVDFLNELMR) are excised as a propeptide.

Belongs to the non-disulfide-bridged peptide (NDBP) superfamily. Short antimicrobial peptide (group 4) family. As to expression, expressed by the venom gland.

It is found in the secreted. It localises to the target cell membrane. In terms of biological role, antimicrobial peptide. Inhibits the growth of Gram-positive and Gram-negative bacteria. Shows antifungal activity with MIC values ranging from 12.5 to 25 uM. Also shows an inhibitory activity on C.albicans biofilms at high concentrations. Shows low cytotoxic activity and has weak hemolytic activity. This is Amphipathic peptide OcyC1 from Opisthacanthus cayaporum (South American scorpion).